Here is a 126-residue protein sequence, read N- to C-terminus: MQMLIPQRLLLILNPILMMKRKKRKKRKKRRERETMMKIPRILKKLRRKRRTRRKRRKRRKRRRRKRRKRRRKRSPRKRRKRRNKDAFYILIISDPSRSLLFGFRKFSIIIQCLTYFSFHILFHNL.

Basic residues-rich tracts occupy residues 21 to 31 (RKKRKKRKKRR) and 41 to 83 (RILK…RKRR). A disordered region spans residues 21–83 (RKKRKKRKKR…RSPRKRRKRR (63 aa)).

This is an uncharacterized protein from Saccharomyces cerevisiae (strain ATCC 204508 / S288c) (Baker's yeast).